The primary structure comprises 312 residues: Isochorismatase (312 aa).

Residues 229 to 302 (VFTCENIRKQ…EWQKLLTTRS (74 aa)) form the Carrier domain. Residue Ser-263 is modified to O-(pantetheine 4'-phosphoryl)serine.

The protein belongs to the isochorismatase family.

The enzyme catalyses isochorismate + H2O = (2S,3S)-2,3-dihydroxy-2,3-dihydrobenzoate + pyruvate. It functions in the pathway siderophore biosynthesis; bacillibactin biosynthesis. In Bacillus subtilis (strain 168), this protein is Isochorismatase (dhbB).